The following is a 292-amino-acid chain: Manganese transport system membrane protein MntC (292 aa).

Helical transmembrane passes span 20–40 (ALTA…FIIL), 58–78 (VVIA…TGVI), 96–116 (SAIG…ITGM), 137–157 (TDLW…ILFY), 168–188 (VMAQ…MLLL), 190–210 (LVTV…MLIT), 226–246 (LCLA…FSVI), and 249–269 (VASG…AFFF).

This sequence belongs to the ABC-3 integral membrane protein family.

The protein resides in the cell membrane. Its function is as follows. This protein is probably a component of a manganese permease, a binding protein-dependent, ATP-driven transport system. In Halalkalibacterium halodurans (strain ATCC BAA-125 / DSM 18197 / FERM 7344 / JCM 9153 / C-125) (Bacillus halodurans), this protein is Manganese transport system membrane protein MntC (mntC).